A 2620-amino-acid chain; its full sequence is Ubiquitin carboxyl-terminal hydrolase 24 (2620 aa).

The UBA domain occupies 3–44 (SEEEQHMTTLLCMGFSDPATIRKALRLAKNDINEAVALLTNE). The interval 45–102 (RPGLDYGGYEPMDSGGGPSPGPGGGPRGDGGGDGGGGGPSRGGSTGGGGGFDPPPAYH) is disordered. Residues 58–95 (SGGGPSPGPGGGPRGDGGGDGGGGGPSRGGSTGGGGGF) show a composition bias toward gly residues. 2 positions are modified to phosphoserine: serine 63 and serine 88. Tyrosine 942 carries the phosphotyrosine modification. Disordered stretches follow at residues 1034 to 1054 (TSGSGTPSGSSADSSTSSSSS) and 1129 to 1151 (TLLSESSSQSSKSPSLSSKQQHQ). Low complexity predominate over residues 1131-1151 (LSESSSQSSKSPSLSSKQQHQ). Residues serine 1141 and serine 1285 each carry the phosphoserine modification. The USP domain occupies 1689 to 2042 (VGLRNGGATC…NAYMLFYQRV (354 aa)). Residue cysteine 1698 is the Nucleophile of the active site. The tract at residues 1921–1945 (ARQDSSSEVGENGRSVDQGGGGSPR) is disordered. The residue at position 1943 (serine 1943) is a Phosphoserine. Histidine 1970 functions as the Proton acceptor in the catalytic mechanism. Residues serine 2047, serine 2077, and serine 2561 each carry the phosphoserine modification. The segment at 2063–2090 (AEDLSLSAPSSPEISPQSSPRPHRPNND) is disordered. Low complexity predominate over residues 2069 to 2082 (SAPSSPEISPQSSP). Threonine 2565 carries the phosphothreonine modification. A disordered region spans residues 2575–2620 (EKEQSGSSNGSESSPANENGDRHLQQGSESPMMIGELRSDLDDVDP). Over residues 2579–2592 (SGSSNGSESSPANE) the composition is skewed to low complexity. At serine 2604 the chain carries Phosphoserine. A compositionally biased stretch (basic and acidic residues) spans 2611-2620 (LRSDLDDVDP).

This sequence belongs to the peptidase C19 family. In terms of assembly, (Microbial infection) Interacts with human cytomegalovirus protein UL38.

The enzyme catalyses Thiol-dependent hydrolysis of ester, thioester, amide, peptide and isopeptide bonds formed by the C-terminal Gly of ubiquitin (a 76-residue protein attached to proteins as an intracellular targeting signal).. Ubiquitin-specific protease that regulates cell survival in various contexts through modulating the protein stability of some of its substrates including DDB2, MCL1 or TP53. Plays a positive role on ferritinophagy where ferritin is degraded in lysosomes and releases free iron. This chain is Ubiquitin carboxyl-terminal hydrolase 24 (USP24), found in Homo sapiens (Human).